A 160-amino-acid chain; its full sequence is Putative NrdI-like protein (160 aa).

It belongs to the NrdI family.

This Streptococcus pyogenes serotype M1 protein is Putative NrdI-like protein.